A 600-amino-acid chain; its full sequence is Proline dehydrogenase 1, mitochondrial (600 aa).

Residues 155-177 (AEHKEMESCTSAAERDGSGTNKR) form a disordered region. Lysine 368 and lysine 486 each carry N6-acetyllysine.

This sequence belongs to the proline oxidase family. The cofactor is FAD. In terms of tissue distribution, expressed in lung, skeletal muscle and brain, to a lesser extent in heart and kidney, and weakly in liver, placenta and pancreas.

The protein resides in the mitochondrion matrix. It carries out the reaction L-proline + a quinone = (S)-1-pyrroline-5-carboxylate + a quinol + H(+). It functions in the pathway amino-acid degradation; L-proline degradation into L-glutamate; L-glutamate from L-proline: step 1/2. Functionally, converts proline to delta-1-pyrroline-5-carboxylate. This chain is Proline dehydrogenase 1, mitochondrial, found in Homo sapiens (Human).